We begin with the raw amino-acid sequence, 299 residues long: Taste receptor type 2 member 4 (299 aa).

Topologically, residues 1-9 (MLRLFYFSA) are extracellular. A helical transmembrane segment spans residues 10 to 30 (IIASVILNFVGIIMNLFITVV). The Cytoplasmic portion of the chain corresponds to 31–46 (NCKTWVKSHRISSSDR). A helical transmembrane segment spans residues 47-67 (ILFSLGITRFLMLGLFLVNTI). Over 68-81 (YFVSSNTERSVYLS) the chain is Extracellular. A helical transmembrane segment spans residues 82-102 (AFFVLCFMFLDSSSLWFVTLL). Over 103–131 (NILYCVKITNFQHSVFLLLKRNISPKIPR) the chain is Cytoplasmic. Residues 132–152 (LLLACVLISAFTTCLYITLSQ) traverse the membrane as a helical segment. Residues 153 to 172 (ASPFPELVTTRNNTSFNINE) lie on the Extracellular side of the membrane. Asn164 and Asn165 each carry an N-linked (GlcNAc...) asparagine glycan. Residues 173–193 (GILSLVVSLVLSSSLQFIINV) form a helical membrane-spanning segment. The Cytoplasmic segment spans residues 194-230 (TSASLLIHSLRRHIQKMQKNATGFWNPQTEAHVGAMK). A helical transmembrane segment spans residues 231–251 (LMVYFLILYIPYSVATLVQYL). At 252–262 (PFYAGMDMGTK) the chain is on the extracellular side. The helical transmembrane segment at 263–283 (SICLIFATLYSPGHSVLIIIT) threads the bilayer. Over 284-299 (HPKLKTTAKKILCFKK) the chain is Cytoplasmic.

This sequence belongs to the G-protein coupled receptor T2R family.

Its subcellular location is the membrane. The protein resides in the cell projection. It localises to the cilium membrane. Functionally, gustducin-coupled receptor implicated in the perception of bitter compounds in the oral cavity and the gastrointestinal tract. Signals through PLCB2 and the calcium-regulated cation channel TRPM5. In airway epithelial cells, binding of denatonium increases the intracellular calcium ion concentration and stimulates ciliary beat frequency. This Pan paniscus (Pygmy chimpanzee) protein is Taste receptor type 2 member 4 (TAS2R4).